The sequence spans 133 residues: Small ribosomal subunit protein uS8 (133 aa).

The protein belongs to the universal ribosomal protein uS8 family. Part of the 30S ribosomal subunit. Contacts proteins S5 and S12.

In terms of biological role, one of the primary rRNA binding proteins, it binds directly to 16S rRNA central domain where it helps coordinate assembly of the platform of the 30S subunit. This Deinococcus deserti (strain DSM 17065 / CIP 109153 / LMG 22923 / VCD115) protein is Small ribosomal subunit protein uS8.